Reading from the N-terminus, the 184-residue chain is Adenine phosphoribosyltransferase (184 aa).

This sequence belongs to the purine/pyrimidine phosphoribosyltransferase family. As to quaternary structure, homodimer.

The protein localises to the cytoplasm. It catalyses the reaction AMP + diphosphate = 5-phospho-alpha-D-ribose 1-diphosphate + adenine. It participates in purine metabolism; AMP biosynthesis via salvage pathway; AMP from adenine: step 1/1. Catalyzes a salvage reaction resulting in the formation of AMP, that is energically less costly than de novo synthesis. This chain is Adenine phosphoribosyltransferase, found in Sphingopyxis alaskensis (strain DSM 13593 / LMG 18877 / RB2256) (Sphingomonas alaskensis).